The chain runs to 425 residues: MHDIRLIREDPAAFDAAIARRGAESASSRLLALDERRRAIATELQAAQTRRNEASKAIGQAKAQKDEATASALMAEVAALKERMPALEAEGAEVEAALDAALAAIPNLPAADVPDGADEQDNAEQHRWGTPPAFAFEAREHADFAGPLGLDFEAAAAISGARFAVLKGGIARLQRALGAFMLDRQTAAGFTEVIPPLLVRDEAVFGTGQLPKFAEDLFRTTDGRWLIPTAEVSLTNLVREQIVAEAELPMKMTALTPCFRSEAGAAGRDTRGLIRQHQFEKVELVAITTPEQSDAVHEAMTKAAEAILEALGLPYRRVLLCTGDMGFTARKTFDLEVWLPGQGCYREISSVSNCGDFQARRMNARYRPAGESKGTRFVHTLNGSGLAVGRTLVAVLENYQQADGSVTIPEALVPYMGGIAELRPA.

Thr-229 to Glu-231 serves as a coordination point for L-serine. Arg-260–Glu-262 serves as a coordination point for ATP. L-serine is bound at residue Glu-283. An ATP-binding site is contributed by Glu-347 to Ser-350. An L-serine-binding site is contributed by Ser-384.

This sequence belongs to the class-II aminoacyl-tRNA synthetase family. Type-1 seryl-tRNA synthetase subfamily. As to quaternary structure, homodimer. The tRNA molecule binds across the dimer.

The protein localises to the cytoplasm. It catalyses the reaction tRNA(Ser) + L-serine + ATP = L-seryl-tRNA(Ser) + AMP + diphosphate + H(+). The catalysed reaction is tRNA(Sec) + L-serine + ATP = L-seryl-tRNA(Sec) + AMP + diphosphate + H(+). Its pathway is aminoacyl-tRNA biosynthesis; selenocysteinyl-tRNA(Sec) biosynthesis; L-seryl-tRNA(Sec) from L-serine and tRNA(Sec): step 1/1. Functionally, catalyzes the attachment of serine to tRNA(Ser). Is also able to aminoacylate tRNA(Sec) with serine, to form the misacylated tRNA L-seryl-tRNA(Sec), which will be further converted into selenocysteinyl-tRNA(Sec). In Rhizorhabdus wittichii (strain DSM 6014 / CCUG 31198 / JCM 15750 / NBRC 105917 / EY 4224 / RW1) (Sphingomonas wittichii), this protein is Serine--tRNA ligase.